Reading from the N-terminus, the 605-residue chain is Formin-binding protein 1-like (605 aa).

Residues 1 to 263 enclose the F-BAR domain; it reads MSWGTELWDQ…AAKSVDERRD (263 aa). Positions 66 to 258 form a coiled coil; that stretch reads FTSCIAFFNI…EGMILAAKSV (193 aa). The tract at residues 245-535 is interaction with CDC42; it reads SKCLEGMILA…EFDDEFEDDD (291 aa). A Phosphoserine modification is found at S295. Positions 325-345 are disordered; the sequence is FGKKPKPQSPPLTPTSLFTSS. Positions 392–484 form a coiled coil; sequence LEDFSHLPPE…VEGKTGVRGD (93 aa). The REM-1 domain occupies 397–474; the sequence is HLPPEQRRKK…IHKNEAWLSE (78 aa). Residues 480 to 490 are compositionally biased toward basic and acidic residues; sequence GVRGDRRHSSD. A disordered region spans residues 480-539; that stretch reads GVRGDRRHSSDINHLVTQGRESPEGSYTDDANQEVRGPPQQHGHHSEFDDEFEDDDPLPA. S488, S501, and S505 each carry phosphoserine. Positions 522-605 are interaction with DNM1; it reads GHHSEFDDEF…VTLEKNSKGS (84 aa). Residues 527–536 show a composition bias toward acidic residues; it reads FDDEFEDDDP. Residues 538–599 form the SH3 domain; it reads PAIGHCKAIY…PTTYIDVTLE (62 aa). The interval 541–597 is interaction with DNM2 and WASL; the sequence is GHCKAIYPFDGHNEGTLAMKEGEVLYIIEEDKGDGWTRARRQNGEEGYVPTTYIDVT. The segment at 541-605 is interaction with DAAM1, DIAPH1 and DIAPH2; the sequence is GHCKAIYPFD…VTLEKNSKGS (65 aa).

This sequence belongs to the FNBP1 family. Homodimerizes, the dimers can polymerize end-to-end to form filamentous structures. Interacts with GTP-bound CDC42. Interacts with DAAM1, DIAPH1, DIAPH2, DNM1, DNM2 and WASL/N-WASP. Interacts with ATG3. Interacts (via SH3 domain) with ABI1, WASF2, CDC42 and WIPF1. As to expression, isoform 1 is expressed in brain. Isoform 2 is expressed in brain, kidney and lung. Within the brain expression is seen in cortical neurons, hippocampal pyramidal neurons, hypothalamus and piriform cortex.

Its subcellular location is the cytoplasm. It is found in the cytoskeleton. It localises to the cell cortex. The protein localises to the cytoplasmic vesicle. The protein resides in the cell membrane. Required to coordinate membrane tubulation with reorganization of the actin cytoskeleton during endocytosis. May bind to lipids such as phosphatidylinositol 4,5-bisphosphate and phosphatidylserine and promote membrane invagination and the formation of tubules. Also promotes CDC42-induced actin polymerization by activating the WASL-WASPIP complex, the predominant form of WASL/N-WASP in cells. Actin polymerization may promote the fission of membrane tubules to form endocytic vesicles. Essential for autophagy of intracellular bacterial pathogens. May negatively regulate neurite extension and axon branching in developing neurons. In Rattus norvegicus (Rat), this protein is Formin-binding protein 1-like (Fnbp1l).